We begin with the raw amino-acid sequence, 475 residues long: Ribulose bisphosphate carboxylase large chain (475 aa).

Positions 1 to 2 are excised as a propeptide; sequence MS. Pro3 carries the N-acetylproline modification. Residue Lys14 is modified to N6,N6,N6-trimethyllysine. Lys175 (proton acceptor) is an active-site residue. 2 residues coordinate D-ribulose 1,5-bisphosphate: Lys175 and Lys177. The Mg(2+) site is built by Lys201, Asp203, and Glu204. Residue Lys201 is modified to N6-carboxylysine. D-ribulose 1,5-bisphosphate is bound at residue Glu204. His294 acts as the Proton acceptor in catalysis. D-ribulose 1,5-bisphosphate contacts are provided by Arg295, His327, Lys334, Ser379, Gly381, Gly403, and Gly404.

The protein belongs to the RuBisCO large chain family. Type I subfamily. As to quaternary structure, heterohexadecamer of 8 large chains and 8 small chains. Heterohexadecamer; disulfide-linked. The disulfide link is formed within the large subunit homodimers. Mg(2+) is required as a cofactor. Post-translationally, the disulfide bond which can form in the large chain dimeric partners within the hexadecamer appears to be associated with oxidative stress and protein turnover.

The protein resides in the plastid. It localises to the chloroplast. The enzyme catalyses 2 (2R)-3-phosphoglycerate + 2 H(+) = D-ribulose 1,5-bisphosphate + CO2 + H2O. The catalysed reaction is D-ribulose 1,5-bisphosphate + O2 = 2-phosphoglycolate + (2R)-3-phosphoglycerate + 2 H(+). Functionally, ruBisCO catalyzes two reactions: the carboxylation of D-ribulose 1,5-bisphosphate, the primary event in carbon dioxide fixation, as well as the oxidative fragmentation of the pentose substrate in the photorespiration process. Both reactions occur simultaneously and in competition at the same active site. Binds to abscisic acid (ABA); only half of the possible binding sites are occupied in the crystal and there are indications this is a low affinity site. The protein is Ribulose bisphosphate carboxylase large chain of Pisum sativum (Garden pea).